The sequence spans 290 residues: ATP synthase gamma chain (290 aa).

It belongs to the ATPase gamma chain family. As to quaternary structure, F-type ATPases have 2 components, CF(1) - the catalytic core - and CF(0) - the membrane proton channel. CF(1) has five subunits: alpha(3), beta(3), gamma(1), delta(1), epsilon(1). CF(0) has three main subunits: a, b and c.

The protein resides in the cell inner membrane. In terms of biological role, produces ATP from ADP in the presence of a proton gradient across the membrane. The gamma chain is believed to be important in regulating ATPase activity and the flow of protons through the CF(0) complex. The chain is ATP synthase gamma chain from Bradyrhizobium diazoefficiens (strain JCM 10833 / BCRC 13528 / IAM 13628 / NBRC 14792 / USDA 110).